The sequence spans 442 residues: Tubulin beta chain (442 aa).

Gln11, Glu67, Ser136, Gly140, Thr141, Gly142, and Asn202 together coordinate GTP. Residue Glu67 coordinates Mg(2+).

The protein belongs to the tubulin family. In terms of assembly, dimer of alpha and beta chains. A typical microtubule is a hollow water-filled tube with an outer diameter of 25 nm and an inner diameter of 15 nM. Alpha-beta heterodimers associate head-to-tail to form protofilaments running lengthwise along the microtubule wall with the beta-tubulin subunit facing the microtubule plus end conferring a structural polarity. Microtubules usually have 13 protofilaments but different protofilament numbers can be found in some organisms and specialized cells. Mg(2+) serves as cofactor.

The protein resides in the cytoplasm. The protein localises to the cytoskeleton. Tubulin is the major constituent of microtubules, a cylinder consisting of laterally associated linear protofilaments composed of alpha- and beta-tubulin heterodimers. Microtubules grow by the addition of GTP-tubulin dimers to the microtubule end, where a stabilizing cap forms. Below the cap, tubulin dimers are in GDP-bound state, owing to GTPase activity of alpha-tubulin. The protein is Tubulin beta chain (TUBB) of Euglena gracilis.